The sequence spans 380 residues: 1-deoxy-D-xylulose 5-phosphate reductoisomerase (380 aa).

8 residues coordinate NADPH: threonine 10, glycine 11, serine 12, isoleucine 13, glycine 36, arginine 37, asparagine 38, and asparagine 120. Lysine 121 is a binding site for 1-deoxy-D-xylulose 5-phosphate. Glutamate 122 is a binding site for NADPH. Residue aspartate 146 participates in Mn(2+) binding. 1-deoxy-D-xylulose 5-phosphate contacts are provided by serine 147, glutamate 148, serine 172, and histidine 195. Mn(2+) is bound at residue glutamate 148. An NADPH-binding site is contributed by glycine 201. Serine 208, asparagine 213, lysine 214, and glutamate 217 together coordinate 1-deoxy-D-xylulose 5-phosphate. Glutamate 217 contributes to the Mn(2+) binding site.

It belongs to the DXR family. Mg(2+) is required as a cofactor. It depends on Mn(2+) as a cofactor.

The catalysed reaction is 2-C-methyl-D-erythritol 4-phosphate + NADP(+) = 1-deoxy-D-xylulose 5-phosphate + NADPH + H(+). It participates in isoprenoid biosynthesis; isopentenyl diphosphate biosynthesis via DXP pathway; isopentenyl diphosphate from 1-deoxy-D-xylulose 5-phosphate: step 1/6. Catalyzes the NADPH-dependent rearrangement and reduction of 1-deoxy-D-xylulose-5-phosphate (DXP) to 2-C-methyl-D-erythritol 4-phosphate (MEP). The sequence is that of 1-deoxy-D-xylulose 5-phosphate reductoisomerase from Listeria monocytogenes serotype 4a (strain HCC23).